Reading from the N-terminus, the 452-residue chain is UDP-N-acetylmuramoyl-tripeptide--D-alanyl-D-alanine ligase (452 aa).

107-113 contributes to the ATP binding site; sequence GSSGKTS.

It belongs to the MurCDEF family. MurF subfamily. As to quaternary structure, monomer.

The protein localises to the cytoplasm. It catalyses the reaction D-alanyl-D-alanine + UDP-N-acetyl-alpha-D-muramoyl-L-alanyl-gamma-D-glutamyl-meso-2,6-diaminopimelate + ATP = UDP-N-acetyl-alpha-D-muramoyl-L-alanyl-gamma-D-glutamyl-meso-2,6-diaminopimeloyl-D-alanyl-D-alanine + ADP + phosphate + H(+). Its pathway is cell wall biogenesis; peptidoglycan biosynthesis. Its function is as follows. Involved in cell wall formation. Catalyzes the final step in the synthesis of UDP-N-acetylmuramoyl-pentapeptide, the precursor of murein. The sequence is that of UDP-N-acetylmuramoyl-tripeptide--D-alanyl-D-alanine ligase from Escherichia coli (strain K12).